Here is a 344-residue protein sequence, read N- to C-terminus: Methionine import ATP-binding protein MetN 1 (344 aa).

The 240-residue stretch at 2 to 241 (IELRNLSQRF…PHHEVTRALI (240 aa)) folds into the ABC transporter domain. Position 38-45 (38-45 (GRSGAGKS)) interacts with ATP.

This sequence belongs to the ABC transporter superfamily. Methionine importer (TC 3.A.1.24) family. The complex is composed of two ATP-binding proteins (MetN), two transmembrane proteins (MetI) and a solute-binding protein (MetQ).

The protein resides in the cell inner membrane. It carries out the reaction L-methionine(out) + ATP + H2O = L-methionine(in) + ADP + phosphate + H(+). The catalysed reaction is D-methionine(out) + ATP + H2O = D-methionine(in) + ADP + phosphate + H(+). In terms of biological role, part of the ABC transporter complex MetNIQ involved in methionine import. Responsible for energy coupling to the transport system. The protein is Methionine import ATP-binding protein MetN 1 of Burkholderia orbicola (strain AU 1054).